Reading from the N-terminus, the 308-residue chain is ATP synthase gamma chain (308 aa).

The protein belongs to the ATPase gamma chain family. As to quaternary structure, F-type ATPases have 2 components, CF(1) - the catalytic core - and CF(0) - the membrane proton channel. CF(1) has five subunits: alpha(3), beta(3), gamma(1), delta(1), epsilon(1). CF(0) has three main subunits: a, b and c.

Its subcellular location is the cell membrane. In terms of biological role, produces ATP from ADP in the presence of a proton gradient across the membrane. The gamma chain is believed to be important in regulating ATPase activity and the flow of protons through the CF(0) complex. The protein is ATP synthase gamma chain of Saccharopolyspora erythraea (strain ATCC 11635 / DSM 40517 / JCM 4748 / NBRC 13426 / NCIMB 8594 / NRRL 2338).